A 716-amino-acid chain; its full sequence is Fatty acid oxidation complex subunit alpha (716 aa).

The segment at Met-1–Ala-189 is enoyl-CoA hydratase/isomerase. Asp-296 is a binding site for substrate. The interval Lys-311–Ala-716 is 3-hydroxyacyl-CoA dehydrogenase. NAD(+) is bound by residues Met-324, Asp-343, Val-400–Glu-402, Lys-407, and Ser-429. The active-site For 3-hydroxyacyl-CoA dehydrogenase activity is His-450. Residue Asn-453 participates in NAD(+) binding. Residues Asn-500 and Tyr-660 each contribute to the substrate site.

This sequence in the N-terminal section; belongs to the enoyl-CoA hydratase/isomerase family. In the C-terminal section; belongs to the 3-hydroxyacyl-CoA dehydrogenase family. As to quaternary structure, heterotetramer of two alpha chains (FadB) and two beta chains (FadA).

The catalysed reaction is a (3S)-3-hydroxyacyl-CoA + NAD(+) = a 3-oxoacyl-CoA + NADH + H(+). It carries out the reaction a (3S)-3-hydroxyacyl-CoA = a (2E)-enoyl-CoA + H2O. The enzyme catalyses a 4-saturated-(3S)-3-hydroxyacyl-CoA = a (3E)-enoyl-CoA + H2O. It catalyses the reaction (3S)-3-hydroxybutanoyl-CoA = (3R)-3-hydroxybutanoyl-CoA. The catalysed reaction is a (3Z)-enoyl-CoA = a 4-saturated (2E)-enoyl-CoA. It carries out the reaction a (3E)-enoyl-CoA = a 4-saturated (2E)-enoyl-CoA. It functions in the pathway lipid metabolism; fatty acid beta-oxidation. Involved in the aerobic and anaerobic degradation of long-chain fatty acids via beta-oxidation cycle. Catalyzes the formation of 3-oxoacyl-CoA from enoyl-CoA via L-3-hydroxyacyl-CoA. It can also use D-3-hydroxyacyl-CoA and cis-3-enoyl-CoA as substrate. The sequence is that of Fatty acid oxidation complex subunit alpha from Shewanella baltica (strain OS155 / ATCC BAA-1091).